We begin with the raw amino-acid sequence, 70 residues long: ATP synthase subunit c (70 aa).

The next 2 membrane-spanning stretches (helical) occupy residues 3–23 and 47–67; these read FIAA…GNGM and FIGV…AFML.

This sequence belongs to the ATPase C chain family. F-type ATPases have 2 components, F(1) - the catalytic core - and F(0) - the membrane proton channel. F(1) has five subunits: alpha(3), beta(3), gamma(1), delta(1), epsilon(1). F(0) has three main subunits: a(1), b(2) and c(10-14). The alpha and beta chains form an alternating ring which encloses part of the gamma chain. F(1) is attached to F(0) by a central stalk formed by the gamma and epsilon chains, while a peripheral stalk is formed by the delta and b chains.

The protein localises to the cell membrane. Its function is as follows. F(1)F(0) ATP synthase produces ATP from ADP in the presence of a proton or sodium gradient. F-type ATPases consist of two structural domains, F(1) containing the extramembraneous catalytic core and F(0) containing the membrane proton channel, linked together by a central stalk and a peripheral stalk. During catalysis, ATP synthesis in the catalytic domain of F(1) is coupled via a rotary mechanism of the central stalk subunits to proton translocation. In terms of biological role, key component of the F(0) channel; it plays a direct role in translocation across the membrane. A homomeric c-ring of between 10-14 subunits forms the central stalk rotor element with the F(1) delta and epsilon subunits. This chain is ATP synthase subunit c, found in Lacticaseibacillus casei (strain BL23) (Lactobacillus casei).